The sequence spans 313 residues: MTFDENISRILVTDKEYDMPFSKGLLARSLSAAGMKPSESYTLAREIERDLNEQNVLKISKDELRRRVYYTLINRDYEGIGEKYLLWRRVLKKHSIIILVGGSSGVGTSTIAFELASRLGIPSVIGTDSIREVMRRSISKDLVPMLYESSYTAWTALRRSPWDEQDTKEMHLLGFERHVEPVLLGIESIIDRSLTEGTSVILEGTHIVPGLMGEKYHSMPNVIFLNLTLSSEETHKKRFTARAKVSDRPLERYLENFEIIKEINQYIVEKSKENNVPVIENVSISETVQKCLEIVTERFSNLNDEPIIDSDIY.

One can recognise an ATP-cone domain in the interval 8–95 (SRILVTDKEY…LWRRVLKKHS (88 aa)).

It belongs to the 2-phosphoglycerate kinase family. A divalent metal cation serves as cofactor.

It carries out the reaction (2R)-2-phosphoglycerate + ATP = (2R)-2,3-bisphosphoglycerate + ADP + H(+). It functions in the pathway thermoadapter biosynthesis; cyclic 2,3-diphosphoglycerate biosynthesis; cyclic 2,3-diphosphoglycerate from 2-phospho-D-glycerate: step 1/2. Its function is as follows. Catalyzes the phosphorylation of 2-phosphoglycerate to 2,3-diphosphoglycerate. Involved in the biosynthesis of cyclic 2,3-bisphosphoglycerate, a thermoprotectant. This chain is 2-phosphoglycerate kinase, found in Methanococcus maripaludis (strain C6 / ATCC BAA-1332).